The following is a 176-amino-acid chain: PPE family protein PPE57 (176 aa).

The protein belongs to the mycobacterial PPE family. Interacts with human TLR2.

It is found in the secreted. The protein resides in the cell wall. It localises to the cell surface. Its function is as follows. Plays a key role in regulating innate and adaptive immune responses through human Toll-like receptor 2 (TLR2). Interacts with TLR2, leading to the subsequent activation of the mitogen-activated protein kinase (MAPK) and nuclear factor kappa B (NF-kappa-B) signaling pathways. Induces macrophage activation by augmenting the expression of several cell surface molecules (CD40, CD80, CD86 and MHC class II) and pro-inflammatory cytokines (TNF-alpha, IL-6 and IL-12p40) within macrophages. Also participates in adaptive immunity by directing Th1-polarised immune responses. Stimulates specific humoral and cellular immune responses in tuberculosis (TB) patients. Induces a strong IgG(1) antibody response and an increased Th1/Th2 type immune response in mice. The chain is PPE family protein PPE57 from Mycobacterium tuberculosis (strain ATCC 25618 / H37Rv).